A 316-amino-acid polypeptide reads, in one-letter code: Conjugated bile acid hydrolase (316 aa).

Catalysis depends on C2, which acts as the Nucleophile. Positions 2 and 18 each coordinate deoxycholate. N81 is a taurine binding site.

Belongs to the peptidase C59 family.

It carries out the reaction cholate + taurine = taurocholate + H2O. The enzyme catalyses taurodeoxycholate + H2O = deoxycholate + taurine. It catalyses the reaction taurochenodeoxycholate + H2O = chenodeoxycholate + taurine. The catalysed reaction is glycocholate + H2O = cholate + glycine. It participates in lipid metabolism; bile acid biosynthesis. Glycocholate hydrolysis is inhibited by various previously identified BSH inhibitors, including KIO(3), NaHIO(3), NaIO(4), CuCl(2), menadione, riboflavin, gossypetin, and the antibiotics oxytetracycline, demeclocycline hydrochloride and methacycline hydrochloride. Bile salt hydrolase that catalyzes the deconjugation of glycine- and taurine-linked bile salts, which occurs naturally in the intestines of animals, releasing amino acid residues and deconjugated bile salts (bile acids). Can hydrolyze the amide bond in the bile salts taurocholate (TCA), taurodeoxycholate (TDCA), taurochenodeoxycholate (TCDCA), taurohyodeoxycholate (THDCA) and tauroursodeoxycholate (TUDCA). Oh et al. did not detect activity with the glycine-conjugated bile salts glycocholate (GCA), glycodeoxycholate (GDCA) and glycochenodeoxycholate (GCDCA). However, a later study shows activity toward glycocholate (GCA). The protein is Conjugated bile acid hydrolase of Lactobacillus acidophilus.